The sequence spans 298 residues: Tyrosine recombinase XerC (298 aa).

Residues 2–88 (TDLHTDVERY…ALRSFFDWLV (87 aa)) form the Core-binding (CB) domain. The region spanning 109 to 288 (HLPKNIDVDD…DFQHLASVYD (180 aa)) is the Tyr recombinase domain. Residues R148, K172, H240, R243, and H266 contribute to the active site. Y275 serves as the catalytic O-(3'-phospho-DNA)-tyrosine intermediate.

This sequence belongs to the 'phage' integrase family. XerC subfamily. In terms of assembly, forms a cyclic heterotetrameric complex composed of two molecules of XerC and two molecules of XerD, in which XerC interacts with XerD via its C-terminal region, XerD interacts with XerC via its C-terminal region and so on.

The protein resides in the cytoplasm. Its activity is regulated as follows. FtsK may regulate the catalytic switch between XerC and XerD in the heterotetrameric complex during the two steps of the recombination process. In terms of biological role, site-specific tyrosine recombinase, which acts by catalyzing the cutting and rejoining of the recombining DNA molecules. Binds cooperatively to specific DNA consensus sequences that are separated from XerD binding sites by a short central region, forming the heterotetrameric XerC-XerD complex that recombines DNA substrates. The complex is essential to convert dimers of the bacterial chromosome into monomers to permit their segregation at cell division. It also contributes to the segregational stability of plasmids. In the complex XerC specifically exchanges the top DNA strands. The protein is Tyrosine recombinase XerC of Shigella dysenteriae serotype 1 (strain Sd197).